Here is a 377-residue protein sequence, read N- to C-terminus: Succinyl-diaminopimelate desuccinylase (377 aa).

Position 67 (His67) interacts with Zn(2+). Residue Asp69 is part of the active site. Asp100 serves as a coordination point for Zn(2+). Residue Glu134 is the Proton acceptor of the active site. Zn(2+) is bound by residues Glu135, Glu163, and His349.

The protein belongs to the peptidase M20A family. DapE subfamily. Homodimer. Zn(2+) serves as cofactor. Co(2+) is required as a cofactor.

It catalyses the reaction N-succinyl-(2S,6S)-2,6-diaminopimelate + H2O = (2S,6S)-2,6-diaminopimelate + succinate. It participates in amino-acid biosynthesis; L-lysine biosynthesis via DAP pathway; LL-2,6-diaminopimelate from (S)-tetrahydrodipicolinate (succinylase route): step 3/3. Its function is as follows. Catalyzes the hydrolysis of N-succinyl-L,L-diaminopimelic acid (SDAP), forming succinate and LL-2,6-diaminopimelate (DAP), an intermediate involved in the bacterial biosynthesis of lysine and meso-diaminopimelic acid, an essential component of bacterial cell walls. In Haemophilus influenzae (strain 86-028NP), this protein is Succinyl-diaminopimelate desuccinylase.